The following is a 205-amino-acid chain: Ribosome maturation factor RimP (205 aa).

The span at 1-13 shows a compositional bias: polar residues; sequence MSNAEATTSSDRT. Positions 1-27 are disordered; sequence MSNAEATTSSDRTGTGKAEAESVHNPE. Positions 18 to 27 are enriched in basic and acidic residues; the sequence is AEAESVHNPE.

It belongs to the RimP family.

It is found in the cytoplasm. In terms of biological role, required for maturation of 30S ribosomal subunits. The chain is Ribosome maturation factor RimP from Arthrobacter sp. (strain FB24).